A 441-amino-acid chain; its full sequence is Capsid protein (441 aa).

The interval 26–63 (DSKKKQPIYQNSSESEESETENKNFIYDFSSEEDFEEP) is disordered. The Nuclear localization signal signature appears at 77 to 79 (KRK). A CCHC-type zinc finger spans residues 381–398 (CQCWLCHEEGHYANECPK).

The protein belongs to the caulimoviridae capsid protein family. In terms of assembly, interacts (via nuclear localization signal) with host importin alpha.

It localises to the virion. Its subcellular location is the host nucleus. Self assembles to form an icosahedral capsid, about 50 nm in diameter, nm, composed of 420 subunits of the viral capsid protein. The capsid encapsulates the genomic dsDNA. Following virus entry into host cell, provides nuclear import of the viral genome. Virus particles do not enter the nucleus, but dock at the nuclear membrane through the interaction with host importins. The chain is Capsid protein from Soybean chlorotic mottle virus.